The following is a 66-amino-acid chain: Nigrocin-2ISa (66 aa).

The N-terminal stretch at 1–22 (MFTLKKSMLLLFFLGTINLSLC) is a signal peptide. Residues 23–43 (QEERDAEEERRDEDNAKMEEI) constitute a propeptide, removed in mature form. An intrachain disulfide couples Cys-60 to Cys-66.

As to expression, expressed by the skin glands.

It is found in the secreted. In terms of biological role, has antimicrobial activity against Gram-negative bacterium E.coli ATCC 8739 (MIC=25 ug), against Gram positive bacteria S.aureus ATCC 6538 (MIC=3.1 ug), methicillin-resistant S.aureus ATCC 43300 (MIC=12.5 ug), B.subtilis ATCC 6633 (MIC=12.5 ug) and against fungus C.albicans ATCC 90028 (MIC=50 ug). The chain is Nigrocin-2ISa from Odorrana ishikawae (Ishikawa's frog).